The chain runs to 447 residues: Tubulin beta-1 chain (447 aa).

GTP contacts are provided by Q11, E69, S138, G142, T143, G144, N204, and N226. E69 provides a ligand contact to Mg(2+).

The protein belongs to the tubulin family. As to quaternary structure, dimer of alpha and beta chains. A typical microtubule is a hollow water-filled tube with an outer diameter of 25 nm and an inner diameter of 15 nM. Alpha-beta heterodimers associate head-to-tail to form protofilaments running lengthwise along the microtubule wall with the beta-tubulin subunit facing the microtubule plus end conferring a structural polarity. Microtubules usually have 13 protofilaments but different protofilament numbers can be found in some organisms and specialized cells. It depends on Mg(2+) as a cofactor.

The protein localises to the cytoplasm. It localises to the cytoskeleton. Tubulin is the major constituent of microtubules, a cylinder consisting of laterally associated linear protofilaments composed of alpha- and beta-tubulin heterodimers. Microtubules grow by the addition of GTP-tubulin dimers to the microtubule end, where a stabilizing cap forms. Below the cap, tubulin dimers are in GDP-bound state, owing to GTPase activity of alpha-tubulin. This chain is Tubulin beta-1 chain (benA), found in Emericella nidulans (strain FGSC A4 / ATCC 38163 / CBS 112.46 / NRRL 194 / M139) (Aspergillus nidulans).